The chain runs to 635 residues: Replication factor C small subunit (635 aa).

ATP is bound at residue 51–58 (GPPGTGKT).

The protein belongs to the activator 1 small subunits family. RfcS subfamily. In terms of assembly, heteromultimer composed of small subunits (RfcS) and large subunits (RfcL). Post-translationally, this protein undergoes a protein self splicing that involves a post-translational excision of the intervening region (intein) followed by peptide ligation.

Functionally, part of the RFC clamp loader complex which loads the PCNA sliding clamp onto DNA. The chain is Replication factor C small subunit (rfcS) from Methanopyrus kandleri (strain AV19 / DSM 6324 / JCM 9639 / NBRC 100938).